The chain runs to 473 residues: Trigger factor (473 aa).

Residues 174–261 form the PPIase FKBP-type domain; the sequence is GDIAVVSFKG…LKDLKEKELP (88 aa). The interval 437–473 is disordered; sequence EISEKVTKSTTKSKTKSKTKKESQAKSEPNKKKKEKK. A compositionally biased stretch (basic and acidic residues) spans 456–466; sequence KKESQAKSEPN.

The protein belongs to the FKBP-type PPIase family. Tig subfamily.

The protein resides in the cytoplasm. The enzyme catalyses [protein]-peptidylproline (omega=180) = [protein]-peptidylproline (omega=0). In terms of biological role, involved in protein export. Acts as a chaperone by maintaining the newly synthesized protein in an open conformation. Functions as a peptidyl-prolyl cis-trans isomerase. The chain is Trigger factor from Prochlorococcus marinus (strain MIT 9515).